Reading from the N-terminus, the 119-residue chain is MSGGVQEQFEIKFRLPDGTDIGPKRYPAASTVATLKESIVAQWPKDKEKGPRTVNDLKLINAGKILENNKTLSECKSPICDFSGLTTMHVVVRAPTSDKQSNKIVAKKPKDFRCGCSIM.

The region spanning 9–75 (FEIKFRLPDG…LENNKTLSEC (67 aa)) is the Ubiquitin-like domain. Position 116 is a cysteine methyl ester (Cys-116). Cys-116 is lipidated: S-farnesyl cysteine. Residues 117-119 (SIM) constitute a propeptide, removed in mature form.

It is found in the cell membrane. In terms of biological role, may serve as docking site to facilitate the association of other proteins to the plasma membrane. In Oryza sativa subsp. japonica (Rice), this protein is Membrane-anchored ubiquitin-fold protein 1 (MUB1).